The primary structure comprises 177 residues: uncharacterized protein (177 aa).

The N-terminal stretch at 1 to 22 is a signal peptide; that stretch reads MCGVVVVIVALVPADPLLPAFA. 3 helical membrane passes run 31 to 51, 94 to 114, and 136 to 156; these read VFIP…TCVF, ISLM…LKFV, and LFPI…LLEI.

The protein resides in the membrane. This is an uncharacterized protein from Saccharomyces cerevisiae (strain ATCC 204508 / S288c) (Baker's yeast).